We begin with the raw amino-acid sequence, 321 residues long: Ferredoxin--NADP reductase (321 aa).

Residues E33, Q41, Y46, V86, L119, D277, and S318 each coordinate FAD.

It belongs to the ferredoxin--NADP reductase type 2 family. In terms of assembly, homodimer. The cofactor is FAD.

The enzyme catalyses 2 reduced [2Fe-2S]-[ferredoxin] + NADP(+) + H(+) = 2 oxidized [2Fe-2S]-[ferredoxin] + NADPH. The chain is Ferredoxin--NADP reductase from Lactococcus lactis subsp. lactis (strain IL1403) (Streptococcus lactis).